A 179-amino-acid chain; its full sequence is Large ribosomal subunit protein uL5 (179 aa).

This sequence belongs to the universal ribosomal protein uL5 family. Part of the 50S ribosomal subunit; part of the 5S rRNA/L5/L18/L25 subcomplex. Contacts the 5S rRNA and the P site tRNA. Forms a bridge to the 30S subunit in the 70S ribosome.

Functionally, this is one of the proteins that bind and probably mediate the attachment of the 5S RNA into the large ribosomal subunit, where it forms part of the central protuberance. In the 70S ribosome it contacts protein S13 of the 30S subunit (bridge B1b), connecting the 2 subunits; this bridge is implicated in subunit movement. Contacts the P site tRNA; the 5S rRNA and some of its associated proteins might help stabilize positioning of ribosome-bound tRNAs. In Syntrophus aciditrophicus (strain SB), this protein is Large ribosomal subunit protein uL5.